Reading from the N-terminus, the 357-residue chain is UDP-N-acetylglucosamine--N-acetylmuramyl-(pentapeptide) pyrophosphoryl-undecaprenol N-acetylglucosamine transferase (357 aa).

Residues 13-15 (SAG), R166, S196, and Q291 contribute to the UDP-N-acetyl-alpha-D-glucosamine site.

This sequence belongs to the glycosyltransferase 28 family. MurG subfamily.

It localises to the cell membrane. The enzyme catalyses di-trans,octa-cis-undecaprenyl diphospho-N-acetyl-alpha-D-muramoyl-L-alanyl-D-glutamyl-meso-2,6-diaminopimeloyl-D-alanyl-D-alanine + UDP-N-acetyl-alpha-D-glucosamine = di-trans,octa-cis-undecaprenyl diphospho-[N-acetyl-alpha-D-glucosaminyl-(1-&gt;4)]-N-acetyl-alpha-D-muramoyl-L-alanyl-D-glutamyl-meso-2,6-diaminopimeloyl-D-alanyl-D-alanine + UDP + H(+). The protein operates within cell wall biogenesis; peptidoglycan biosynthesis. Its function is as follows. Cell wall formation. Catalyzes the transfer of a GlcNAc subunit on undecaprenyl-pyrophosphoryl-MurNAc-pentapeptide (lipid intermediate I) to form undecaprenyl-pyrophosphoryl-MurNAc-(pentapeptide)GlcNAc (lipid intermediate II). In Clostridium perfringens (strain ATCC 13124 / DSM 756 / JCM 1290 / NCIMB 6125 / NCTC 8237 / Type A), this protein is UDP-N-acetylglucosamine--N-acetylmuramyl-(pentapeptide) pyrophosphoryl-undecaprenol N-acetylglucosamine transferase.